Here is a 530-residue protein sequence, read N- to C-terminus: Metal transporter Nramp2 (530 aa).

Positions 1–35 (MENDVKENLEEEEDRLLPPPPPSQSLPSTDSESEA) are disordered. 12 helical membrane-spanning segments follow: residues 68 to 88 (LWLFTGPGFLMSIAFLDPGNL), 96 to 116 (AIAGYSLLWLLMWATAMGLLI), 153 to 173 (LALIGADIQEVIGSAIAIQIL), 177 to 197 (FLPLWAGVVITASDCFLFLFL), 205 to 225 (LEAVFAVLIATMGLSFAWMFG), 251 to 271 (AVGVVGCVIMPHNVFLHSALV), 297 to 317 (VALFISFMINLFVTTVFAKGF), 339 to 359 (FGGGLLPILYIWGIGLLAAGQ), 395 to 415 (IVPTMIVAIVFNTSEASLDVL), 418 to 438 (WLNVLQSVQIPFALLPLLTLV), 456 to 476 (IAWTVAALVMIINGYLLLDFF), and 484 to 504 (LFGVTVCVWTTAYIAFIVYLI).

This sequence belongs to the NRAMP (TC 2.A.55) family.

It is found in the membrane. Seems to be involved in iron uptake. The protein is Metal transporter Nramp2 (NRAMP2) of Arabidopsis thaliana (Mouse-ear cress).